The following is a 284-amino-acid chain: 2,3,4,5-tetrahydropyridine-2,6-dicarboxylate N-succinyltransferase (284 aa).

Substrate contacts are provided by R111 and D148.

The protein belongs to the transferase hexapeptide repeat family. Homotrimer.

Its subcellular location is the cytoplasm. It carries out the reaction (S)-2,3,4,5-tetrahydrodipicolinate + succinyl-CoA + H2O = (S)-2-succinylamino-6-oxoheptanedioate + CoA. Its pathway is amino-acid biosynthesis; L-lysine biosynthesis via DAP pathway; LL-2,6-diaminopimelate from (S)-tetrahydrodipicolinate (succinylase route): step 1/3. The polypeptide is 2,3,4,5-tetrahydropyridine-2,6-dicarboxylate N-succinyltransferase (Brucella suis (strain ATCC 23445 / NCTC 10510)).